A 144-amino-acid polypeptide reads, in one-letter code: Elicitor-responsive protein 3 (144 aa).

A C2 domain is found at 1 to 103 (MVQGTLEVLL…YTEGSIPPTV (103 aa)). D20, D26, D73, D75, and D81 together coordinate Ca(2+). The segment at 123–144 (TPEDDRDRGLSEEDIGGWKQSS) is disordered.

Requires Ca(2+) as cofactor.

The protein is Elicitor-responsive protein 3 (ERG3) of Oryza sativa subsp. indica (Rice).